The primary structure comprises 220 residues: Nitrile hydratase subunit beta (220 aa).

It belongs to the nitrile hydratase subunit beta family. In terms of assembly, heterodimer of an alpha and a beta chain.

It catalyses the reaction an aliphatic primary amide = an aliphatic nitrile + H2O. In terms of biological role, NHase catalyzes the hydration of various nitrile compounds to the corresponding amides. This is Nitrile hydratase subunit beta (nthB) from Pseudomonas chlororaphis (Pseudomonas aureofaciens).